A 151-amino-acid polypeptide reads, in one-letter code: MEKTTLPNLETLDKQWYVIDAAGQRLGRLASEIAMILRGKNKPTYTPHLDTGDFVIVINAEKVIVTGKKSQQKVYHRHSGRPGGMKVETFEKLQARLPERIVEKAVKGMLPKNSLGRQLFTKLKVYSGSNHPHQAQKPETLTINTIPGGNN.

The tract at residues serine 129–asparagine 151 is disordered.

It belongs to the universal ribosomal protein uL13 family. Part of the 50S ribosomal subunit.

Its function is as follows. This protein is one of the early assembly proteins of the 50S ribosomal subunit, although it is not seen to bind rRNA by itself. It is important during the early stages of 50S assembly. This is Large ribosomal subunit protein uL13 from Gloeothece citriformis (strain PCC 7424) (Cyanothece sp. (strain PCC 7424)).